Here is a 176-residue protein sequence, read N- to C-terminus: Inner membrane-spanning protein YciB (176 aa).

6 helical membrane-spanning segments follow: residues 3 to 23 (FLFDLFPIILFFVAFKVWGIF), 24 to 44 (TATAVAIVATLAQVAWVAFRH), 49 to 69 (TMLWVSLGVIVVFGGATLVLH), 72 to 92 (KFIQWKPTVLYWLFAIGLLAA), 121 to 141 (VAWALFFAVLGVANLYVVHNF), and 149 to 169 (FKLFGTTGAMVVFIILQSLWL).

Belongs to the YciB family.

It localises to the cell inner membrane. Functionally, plays a role in cell envelope biogenesis, maintenance of cell envelope integrity and membrane homeostasis. The sequence is that of Inner membrane-spanning protein YciB from Burkholderia orbicola (strain MC0-3).